The sequence spans 1698 residues: Bromodomain adjacent to zinc finger domain protein 2A (1698 aa).

Disordered regions lie at residues 240–262 (QSTP…QLPS) and 352–387 (VMQE…MTIE). Positions 377–387 (ENVSQDEMTIE) are enriched in polar residues. Residues 418–489 (IATPEQVCFP…EHFSFSPRMP (72 aa)) enclose the MBD domain. 2 disordered regions span residues 524–550 (RGRP…PPKV) and 610–653 (EKEE…DRKL). A compositionally biased stretch (basic and acidic residues) spans 528 to 540 (RNLEKAKAKEQKA). Residues 541 to 553 (KRGRGRPPKVKMI) constitute a DNA-binding region (a.T hook 1). A coiled-coil region spans residues 579-638 (VQLCKLKKKMRRKARNQEAKLEAAKKLKEIKEKEEKKQKIQKAKNQEKAKNQEKKRTRRQ). The segment covering 610–632 (EKEEKKQKIQKAKNQEKAKNQEK) has biased composition (basic and acidic residues). The region spanning 701–766 (SCAFSDCLTT…LQAAMINPGL (66 aa)) is the DDT domain. 4 disordered regions span residues 884 to 905 (ITTT…NDEL), 1013 to 1063 (SFGS…PLTN), 1088 to 1110 (TVLT…SEAT), and 1123 to 1149 (TPCR…TAAT). Residues 890-900 (SLRRRSERNAE) are compositionally biased toward basic and acidic residues. Polar residues-rich tracts occupy residues 1023–1040 (HPRN…SCHC) and 1051–1063 (VTDQ…PLTN). Residues 1091–1108 (TPESSPPHSESTPIISSE) are compositionally biased toward low complexity. A compositionally biased stretch (polar residues) spans 1124 to 1149 (PCRNHNQGLSTHSSNRLSPPSPTAAT). The segment at residues 1204–1216 (EKRRGRRPSKLLK) is a DNA-binding region (a.T hook 3). The segment at 1476–1526 (KVTCLYCRKGDNDELLLLCDSCDRGCHTYCHRPRMNEIPEGDWFCPTCISL) adopts a PHD-type zinc-finger fold. Positions 1549–1587 (FTEDSPSKPSRRREHPTASQFSPGESPASKKRRMGTRSQ) are disordered. The 105-residue stretch at 1585 to 1689 (RSQSPDLTFC…KFYDARWEEF (105 aa)) folds into the Bromo domain.

It belongs to the WAL family. Component of the NoRC complex, at least composed of SMARCA5/SNF2H and BAZ2A/TIP5.

It is found in the nucleus. The protein resides in the nucleolus. In terms of biological role, essential component of the NoRC (nucleolar remodeling complex) complex, a complex that mediates silencing of a fraction of rDNA by recruiting histone-modifying enzymes and DNA methyltransferases, leading to heterochromatin formation and transcriptional silencing. In the complex, it plays a central role by being recruited to rDNA and by targeting chromatin modifying enzymes such as HDAC1, leading to repress RNA polymerase I transcription. Recruited to rDNA via its interaction with TTF1 and its ability to recognize and bind histone H4 acetylated on 'Lys-16' (H4K16ac), leading to deacetylation of H4K5ac, H4K8ac, H4K12ac but not H4K16ac. Specifically binds pRNAs, 150-250 nucleotide RNAs that are complementary in sequence to the rDNA promoter; pRNA-binding is required for heterochromatin formation and rDNA silencing. This Xenopus laevis (African clawed frog) protein is Bromodomain adjacent to zinc finger domain protein 2A (baz2a).